We begin with the raw amino-acid sequence, 687 residues long: Methionine--tRNA ligase (687 aa).

The 'HIGH' region motif lies at 14–24 (PYANGYIHLGH). The Zn(2+) site is built by Cys-145, Cys-148, Cys-158, and Cys-161. Residues 329–333 (KMSKS) carry the 'KMSKS' region motif. Lys-332 contributes to the ATP binding site. Residues 585–687 (DFDKVDLRIG…DGAQVGQRVK (103 aa)) enclose the tRNA-binding domain.

Belongs to the class-I aminoacyl-tRNA synthetase family. MetG type 1 subfamily. Homodimer. Zn(2+) serves as cofactor.

The protein localises to the cytoplasm. The enzyme catalyses tRNA(Met) + L-methionine + ATP = L-methionyl-tRNA(Met) + AMP + diphosphate. Its function is as follows. Is required not only for elongation of protein synthesis but also for the initiation of all mRNA translation through initiator tRNA(fMet) aminoacylation. In Bdellovibrio bacteriovorus (strain ATCC 15356 / DSM 50701 / NCIMB 9529 / HD100), this protein is Methionine--tRNA ligase.